The following is a 596-amino-acid chain: Bromodomain-containing protein 9 (596 aa).

The segment covering 1-10 has biased composition (basic residues); that stretch reads MGKKHKKHKA. 2 disordered regions span residues 1–26 and 38–137; these read MGKK…PLEK and EVTE…AENE. A compositionally biased stretch (basic and acidic residues) spans 50–62; sequence SYYDDRSDHERER. Position 56 is a phosphoserine (Ser56). The span at 63–73 shows a compositional bias: basic residues; it reads HREKKKKKKKK. The span at 74–85 shows a compositional bias: basic and acidic residues; it reads SEKEKHLDEEER. Positions 86–97 are enriched in basic residues; that stretch reads RKRKEEKKRKRE. The span at 111–126 shows a compositional bias: basic and acidic residues; sequence DPGKKVEVEPPPDRPV. A Bromo domain is found at 136 to 240; sequence NESTPIQRLL…HAGFKMMSKA (105 aa). The tract at residues 214 to 216 is histone H4K5ac H4K8ac and histone H4K5bu H4K8bu binding; that stretch reads TYN. Lys372 carries the N6-acetyllysine; alternate modification. Lys372 participates in a covalent cross-link: Glycyl lysine isopeptide (Lys-Gly) (interchain with G-Cter in SUMO2); alternate. Residues 536–596 form a disordered region; the sequence is AQAERGGSRP…SPEPAAPAKN (61 aa). Residues 543 to 555 are compositionally biased toward low complexity; that stretch reads SRPSSNLSSLSTA. Phosphoserine occurs at positions 565 and 587.

As to quaternary structure, binds acetylated histones H3 and H4. Binds butyrylated histone H4. Component of the multiprotein chromatin-remodeling subcomplex SWI/SNF called GBAF, which includes at least BICRA or BICRAL (mutually exclusive), BRD9, SS18, the core BAF subunits, SMARCA2/BRM, SMARCA4/BRG1/BAF190A, ACTL6A/BAF53, SMARCC1/BAF155, and SMARCD1/BAF60A. Interacts (via N-terminal bromodomain) with acetylated RAD54. Interacts (via C-terminus) with RAD51.

Its subcellular location is the nucleus. Functionally, plays a role in chromatin remodeling and regulation of transcription. Acts as a chromatin reader that recognizes and binds acylated histones: binds histones that are acetylated and/or butyrylated. Component of SWI/SNF chromatin remodeling subcomplex GBAF that carries out key enzymatic activities, changing chromatin structure by altering DNA-histone contacts within a nucleosome in an ATP-dependent manner. Also orchestrates the RAD51-RAD54 complex formation and thereby plays a role in homologous recombination (HR). In Mus musculus (Mouse), this protein is Bromodomain-containing protein 9 (Brd9).